The following is a 409-amino-acid chain: Probable tRNA N6-adenosine threonylcarbamoyltransferase, mitochondrial (409 aa).

Residues 1 to 31 constitute a mitochondrion transit peptide; sequence MHALRNFAGNGIANVFGCGIRRRLSYVLGIE. A divalent metal cation-binding residues include His135 and His139. Residues 159–163, Asp192, Gly212, Glu216, 322–323, and Ser350 each bind substrate; these read LASGG and NN. Asp351 is an a divalent metal cation binding site.

Belongs to the KAE1 / TsaD family. Homodimer. A divalent metal cation serves as cofactor.

It localises to the mitochondrion. It carries out the reaction L-threonylcarbamoyladenylate + adenosine(37) in tRNA = N(6)-L-threonylcarbamoyladenosine(37) in tRNA + AMP + H(+). Functionally, required for the formation of a threonylcarbamoyl group on adenosine at position 37 (t(6)A37) in mitochondrial tRNAs that read codons beginning with adenine. Probably involved in the transfer of the threonylcarbamoyl moiety of threonylcarbamoyl-AMP (TC-AMP) to the N6 group of A37. Involved in mitochondrial genome maintenance. The polypeptide is Probable tRNA N6-adenosine threonylcarbamoyltransferase, mitochondrial (Drosophila melanogaster (Fruit fly)).